Reading from the N-terminus, the 457-residue chain is UDP-N-acetylmuramate--L-alanine ligase (457 aa).

109-115 (GTDGKTT) contacts ATP.

The protein belongs to the MurCDEF family.

Its subcellular location is the cytoplasm. It carries out the reaction UDP-N-acetyl-alpha-D-muramate + L-alanine + ATP = UDP-N-acetyl-alpha-D-muramoyl-L-alanine + ADP + phosphate + H(+). It participates in cell wall biogenesis; peptidoglycan biosynthesis. Its function is as follows. Cell wall formation. The chain is UDP-N-acetylmuramate--L-alanine ligase from Thermotoga petrophila (strain ATCC BAA-488 / DSM 13995 / JCM 10881 / RKU-1).